Reading from the N-terminus, the 565-residue chain is Mediator of RNA polymerase II transcription subunit 17 (565 aa).

A compositionally biased stretch (polar residues) spans 138 to 152; the sequence is TSLNSDRLGQDSNDN. Residues 138–160 form a disordered region; it reads TSLNSDRLGQDSNDNQESKATDS.

Belongs to the Mediator complex subunit 17 family. Component of the Mediator complex.

It localises to the nucleus. Component of the Mediator complex, a coactivator involved in the regulated transcription of nearly all RNA polymerase II-dependent genes. Mediator functions as a bridge to convey information from gene-specific regulatory proteins to the basal RNA polymerase II transcription machinery. Mediator is recruited to promoters by direct interactions with regulatory proteins and serves as a scaffold for the assembly of a functional preinitiation complex with RNA polymerase II and the general transcription factors. In Candida albicans (strain SC5314 / ATCC MYA-2876) (Yeast), this protein is Mediator of RNA polymerase II transcription subunit 17 (SRB4).